The sequence spans 675 residues: Rho GTPase-activating protein 40 (675 aa).

Disordered stretches follow at residues 95 to 118 (RDEL…EAES) and 187 to 218 (KMSS…PGGL). Residues 103 to 116 (SGGNEGQLPEEGEA) are compositionally biased toward acidic residues. In terms of domain architecture, Rho-GAP spans 323–522 (VPLDSLLEAD…IMVHYQDLLW (200 aa)).

Functionally, GTPase activator for the Rho-type GTPases by converting them to an inactive GDP-bound state. This chain is Rho GTPase-activating protein 40, found in Homo sapiens (Human).